A 318-amino-acid chain; its full sequence is Receptor homology region, transmembrane domain- and RING domain-containing protein 6 (318 aa).

An N-terminal signal peptide occupies residues 1–20 (MNGSWITILSLLVISQLASS). Residues 22–162 (VTLIGKNTFL…LIPGFGISSW (141 aa)) lie on the Lumenal side of the membrane. Cysteines 62 and 87 form a disulfide. Residues 70-143 (EKGSKFRPSY…RTSGEVLKEY (74 aa)) enclose the PA domain. A glycan (N-linked (GlcNAc...) asparagine) is linked at Asn-121. The helical transmembrane segment at 163-183 (SIMAITFVSLLVISAVLASYF) threads the bilayer. At 184 to 318 (SVRRHRIRQH…DLPIVVRVYL (135 aa)) the chain is on the cytoplasmic side. The RING-type; atypical zinc finger occupies 233 to 275 (CAICIDDYRVGEILRILPCKHKYHAVCIDSWLGRCRSFCPVCK).

The protein resides in the prevacuolar compartment membrane. Its subcellular location is the protein storage vacuole membrane. Its function is as follows. Involved in the trafficking of vacuolar proteins. May function as a sorting receptor for protein trafficking to the protein storage vacuole (PSV). This chain is Receptor homology region, transmembrane domain- and RING domain-containing protein 6 (RMR6), found in Arabidopsis thaliana (Mouse-ear cress).